The primary structure comprises 159 residues: Riboflavin kinase (159 aa).

Residue 38-43 (GLGEGR) participates in CDP binding. Thr67 and Asn69 together coordinate Mg(2+). FMN-binding residues include Thr126 and Glu134. 139-142 (HKLR) provides a ligand contact to CDP.

This sequence belongs to the archaeal riboflavin kinase family. The cofactor is Mg(2+).

The catalysed reaction is riboflavin + CTP = CDP + FMN + H(+). The protein operates within cofactor biosynthesis; FMN biosynthesis; FMN from riboflavin (CTP route): step 1/1. Its function is as follows. Catalyzes the CTP-dependent phosphorylation of riboflavin (vitamin B2) to form flavin mononucleotide (FMN). This is Riboflavin kinase from Sulfolobus acidocaldarius (strain ATCC 33909 / DSM 639 / JCM 8929 / NBRC 15157 / NCIMB 11770).